Reading from the N-terminus, the 431-residue chain is 3-phosphoshikimate 1-carboxyvinyltransferase (431 aa).

Positions 21, 22, and 26 each coordinate 3-phosphoshikimate. Lys-21 is a phosphoenolpyruvate binding site. 2 residues coordinate phosphoenolpyruvate: Gly-94 and Arg-122. 3-phosphoshikimate contacts are provided by Ser-167, Gln-169, Asp-315, and Lys-342. Gln-169 provides a ligand contact to phosphoenolpyruvate. Asp-315 acts as the Proton acceptor in catalysis. 2 residues coordinate phosphoenolpyruvate: Arg-346 and Arg-388.

This sequence belongs to the EPSP synthase family. In terms of assembly, monomer.

The protein localises to the cytoplasm. The enzyme catalyses 3-phosphoshikimate + phosphoenolpyruvate = 5-O-(1-carboxyvinyl)-3-phosphoshikimate + phosphate. It participates in metabolic intermediate biosynthesis; chorismate biosynthesis; chorismate from D-erythrose 4-phosphate and phosphoenolpyruvate: step 6/7. Functionally, catalyzes the transfer of the enolpyruvyl moiety of phosphoenolpyruvate (PEP) to the 5-hydroxyl of shikimate-3-phosphate (S3P) to produce enolpyruvyl shikimate-3-phosphate and inorganic phosphate. In Pelotomaculum thermopropionicum (strain DSM 13744 / JCM 10971 / SI), this protein is 3-phosphoshikimate 1-carboxyvinyltransferase.